The chain runs to 111 residues: Photosystem II reaction center Psb28 protein (111 aa).

It belongs to the Psb28 family. Part of the photosystem II complex.

It localises to the cellular thylakoid membrane. The polypeptide is Photosystem II reaction center Psb28 protein (Gloeothece citriformis (strain PCC 7424) (Cyanothece sp. (strain PCC 7424))).